Here is a 201-residue protein sequence, read N- to C-terminus: Superoxide dismutase [Mn] (201 aa).

H27, H81, D163, and H167 together coordinate Mn(2+).

Belongs to the iron/manganese superoxide dismutase family. Homodimer. The cofactor is Mn(2+).

It localises to the secreted. It catalyses the reaction 2 superoxide + 2 H(+) = H2O2 + O2. Destroys superoxide anion radicals which are normally produced within the cells and which are toxic to biological systems. The chain is Superoxide dismutase [Mn] (sodA) from Streptococcus pyogenes serotype M6 (strain ATCC BAA-946 / MGAS10394).